Reading from the N-terminus, the 574-residue chain is MSADIVDIGHTGWMPSVQSLSILLVPGALVLVILYLCERQCNDLMGAPPPGPWGLPFLGYLPFLDARAPHKSLQKLAKRYGGIFELKMGRVPTVVLSDAALVRDFFRRDVMTGRAPLYLTHGIMGGFGIICAQEDIWRHARRETIDWLKALGMTRRPGELRARLERRIARGVDECVRLFDTEAKKSCASEVNPLPALHHSLGNIINDLVFGITYKRDDPDWLYLQRLQEEGVKLIGVSGVVNFLPWLRHLPANVRNIRFLLEGKAKTHAIYDRIVEACGQRLKEKQKVFKELQEQKRLQRQLEKEQLRQSKEADPSQEQSEADEDDEESDEEDTYEPECILEHFLAVRDTDSQLYCDDQLRHLLADLFGAGVDTSLATLRWFLLYLAREQRCQRRLHELLLPLGPSPTLEELEPLAYLRACISETMRIRSVVPLGIPHGCKENFVVGDYFIKGGSMIVCSEWAIHMDPVAFPEPEEFRPERFLTADGAYQAPPQFIPFSSGYRMCPGEEMARMILTLFTGRILRRFHLELPSGTEVDMAGESGITLTPTPHMLRFTKLPAVEMRHAPDGAVVQD.

Basic and acidic residues predominate over residues 303–314 (EKEQLRQSKEAD). Residues 303 to 333 (EKEQLRQSKEADPSQEQSEADEDDEESDEED) are disordered. Residues 320–333 (SEADEDDEESDEED) show a composition bias toward acidic residues. Residue Cys-505 participates in heme binding.

The protein belongs to the cytochrome P450 family. The cofactor is heme. In terms of tissue distribution, first seen at the early (syncytial) blastoderm stage 4. During cellularization of the blastoderm (stage 5), stripes of expression appear and remain through to stage 10. Expression becomes undetectable during germ band retraction (stages 11-14). By stage 15, some expression resumes in the primordium of the ring gland, so that by stage 17 strong expression is seen, but only in the ring gland. This specific localization continues throughout the larval instars (at protein level). Expressed in the prothoracic gland cells of the larval ring gland (RG). Levels decline just after the molt to the third instar then increase later during the wandering stage. Low levels of expression are seen in the larval brain and fat body. In the adult, majority of expression is restricted to the ovaries, with low levels in the head and carcass of both sexes.

Its subcellular location is the endoplasmic reticulum membrane. The protein localises to the microsome membrane. It carries out the reaction 2,22,25-trideoxyecdysone + 2 reduced [adrenodoxin] + O2 + 2 H(+) = 2,22-dideoxyecdysone + 2 oxidized [adrenodoxin] + H2O. The protein operates within steroid biosynthesis; ecdysteroid biosynthesis. Functionally, involved in the metabolism of insect hormones; responsible for ecdysteroid C25-hydroxylase activity. May be involved in the breakdown of synthetic insecticides. The protein is Cytochrome P450 306a1 of Drosophila melanogaster (Fruit fly).